The primary structure comprises 482 residues: MKTLNRRDFPGAQYPERIIQFGEGNFLRAFVDWQIDLLNEHTDLNSGVVVVRPIETSFPPSLSTQDGLYTTIIRGLNEKGEAVSDARLIRSVNREISVYSEYDEFLKLAHNPEMRFVFSNTTEAGISYHAGDKFDDAPAISYPAKLTRLLFERFSHFNGALDKGWIIIPCELIDYNGDALRELVLRYAQEWALPEAFIQWLDQANSFCSTLVDRIVTGYPRDEVAKLEEELGYHDGFLDTAEHFYLFVIQGPKSLATELRLDKYPLNVLIVDDIKPYKERKVAILNGAHTALVPVAFQAGLDTVGEAMNDAEICAFVEKAIYEEIIPVLDLPRDELESFASAVTGRFRNPYKHQLLSIALNGMTKFRTRILPQLLAGQKANGTLPARLTFALAALIAFYRGERNGETYPVQDDAHWLERYQQLWSQHRDHVIGTQELVAIVLAEKDHWEQDLTQVPGLVEQVANDLDAILEKGMREAVRPLC.

18–29 contributes to the NAD(+) binding site; the sequence is IIQFGEGNFLRA.

It belongs to the mannitol dehydrogenase family. UxaB subfamily.

It carries out the reaction D-altronate + NAD(+) = keto-D-tagaturonate + NADH + H(+). It functions in the pathway carbohydrate metabolism; pentose and glucuronate interconversion. The protein is Altronate oxidoreductase of Shigella sonnei (strain Ss046).